A 194-amino-acid chain; its full sequence is Mitochondrial import inner membrane translocase subunit Tim22 (194 aa).

2 cysteine pairs are disulfide-bonded: Cys69/Cys141 and Cys160/Cys179. 3 helical membrane passes run 74-94 (VLAC…TAGI), 123-143 (MSYA…ECLV), and 170-190 (AGVK…AAID).

This sequence belongs to the Tim17/Tim22/Tim23 family. As to quaternary structure, component of the TIM22 complex, whose core is composed of TIMM22, associated with peripheral protein FXC1/TIMM10B and the 70 kDa heterohexamer. In most cases, the 70 kDa complex is composed of TIMM9 and TIMM10 (TIMM10A or TIMM10B). A small fraction of the 70 kDa complex is composed of TIMM8 (TIMM8A/DDP1 or TIMM8B/DDP2) and TIMM13. The TIM22 complex also contains AGK and TIMM29. Interacts directly with TIMM9, TIMM10A and FXC1/TIMM10B. Interacts (when oxidized) with TIMM29; interaction is direct. Disulfide bonds promote efficient assembly of the TIM22 complex.

Its subcellular location is the mitochondrion inner membrane. Essential core component of the TIM22 complex, a complex that mediates the import and insertion of multi-pass transmembrane proteins into the mitochondrial inner membrane. In the TIM22 complex, it constitutes the voltage-activated and signal-gated channel. Forms a twin-pore translocase that uses the membrane potential as external driving force in 2 voltage-dependent steps. The chain is Mitochondrial import inner membrane translocase subunit Tim22 (Timm22) from Mus musculus (Mouse).